Reading from the N-terminus, the 92-residue chain is UPF0250 protein XOO3732 (92 aa).

This sequence belongs to the UPF0250 family.

The sequence is that of UPF0250 protein XOO3732 from Xanthomonas oryzae pv. oryzae (strain MAFF 311018).